A 599-amino-acid polypeptide reads, in one-letter code: Fumarate reductase flavoprotein subunit (599 aa).

FAD is bound by residues 12-16 (GAGGG), 36-38 (VSK), 44-52 (THTVAAEGG), 156-158 (HFV), and Asp-212. His-45 is modified (tele-8alpha-FAD histidine). Active-site residues include His-233 and Arg-249. Residues 357-358 (HY), Glu-381, and 392-398 (RLGSNSL) each bind FAD.

This sequence belongs to the FAD-dependent oxidoreductase 2 family. FRD/SDH subfamily. Part of an enzyme complex containing four subunits: a flavoprotein (FrdA), an iron-sulfur protein (FrdB), and two hydrophobic anchor proteins (FrdC and FrdD). It depends on FAD as a cofactor.

It is found in the cell inner membrane. The enzyme catalyses a quinone + succinate = fumarate + a quinol. The catalysed reaction is a menaquinone + succinate = a menaquinol + fumarate. In Haemophilus influenzae (strain ATCC 51907 / DSM 11121 / KW20 / Rd), this protein is Fumarate reductase flavoprotein subunit (frdA).